A 106-amino-acid chain; its full sequence is uncharacterized protein (106 aa).

It belongs to the csb family.

This is an uncharacterized protein from Dictyostelium discoideum (Social amoeba).